The primary structure comprises 129 residues: Phosphomevalonate dehydratase small subunit (129 aa).

Serine 61 (proton acceptor) is an active-site residue.

Belongs to the AcnX type II small subunit family. Heterodimer composed of a large subunit (PMDh-L) and a small subunit (PMDh-S).

It carries out the reaction (R)-5-phosphomevalonate = (2E)-3-methyl-5-phosphooxypent-2-enoate + H2O. Its pathway is isoprenoid biosynthesis; isopentenyl diphosphate biosynthesis via mevalonate pathway. Its function is as follows. Component of a hydro-lyase that catalyzes the dehydration of mevalonate 5-phosphate (MVA5P) to form trans-anhydromevalonate 5-phosphate (tAHMP). Involved in the archaeal mevalonate (MVA) pathway, which provides fundamental precursors for isoprenoid biosynthesis, such as isopentenyl diphosphate (IPP) and dimethylallyl diphosphate (DMAPP). The chain is Phosphomevalonate dehydratase small subunit from Methanocaldococcus jannaschii (strain ATCC 43067 / DSM 2661 / JAL-1 / JCM 10045 / NBRC 100440) (Methanococcus jannaschii).